Consider the following 272-residue polypeptide: 3-methyl-2-oxobutanoate hydroxymethyltransferase (272 aa).

The Mg(2+) site is built by D42 and D86. 3-methyl-2-oxobutanoate is bound by residues 42-43, D86, and K116; that span reads DS. E118 contacts Mg(2+). The active-site Proton acceptor is the E185.

Belongs to the PanB family. As to quaternary structure, homodecamer; pentamer of dimers. It depends on Mg(2+) as a cofactor.

The protein resides in the cytoplasm. The enzyme catalyses 3-methyl-2-oxobutanoate + (6R)-5,10-methylene-5,6,7,8-tetrahydrofolate + H2O = 2-dehydropantoate + (6S)-5,6,7,8-tetrahydrofolate. The protein operates within cofactor biosynthesis; (R)-pantothenate biosynthesis; (R)-pantoate from 3-methyl-2-oxobutanoate: step 1/2. Its function is as follows. Catalyzes the reversible reaction in which hydroxymethyl group from 5,10-methylenetetrahydrofolate is transferred onto alpha-ketoisovalerate to form ketopantoate. This Prochlorococcus marinus (strain MIT 9313) protein is 3-methyl-2-oxobutanoate hydroxymethyltransferase.